We begin with the raw amino-acid sequence, 503 residues long: Glucosaminyl-phosphatidylinositol-acyltransferase PIGW (503 aa).

Residues 1 to 21 lie on the Lumenal side of the membrane; sequence MSQKQMKEAFVSNQNGTSVLE. The N-linked (GlcNAc...) asparagine glycan is linked to Asn15. The helical transmembrane segment at 22–42 threads the bilayer; it reads ITEGLCLPALCILCRGLLIIL. Residues 43–56 lie on the Cytoplasmic side of the membrane; the sequence is SQQLCSSLHNSRTR. The helical transmembrane segment at 57–75 threads the bilayer; the sequence is FLVDFAFLIVPLVTTLTIF. The Lumenal portion of the chain corresponds to 76 to 78; it reads SSF. A helical transmembrane segment spans residues 79-98; it reads VLLEYLVAIILGAGLLYEIY. The Cytoplasmic segment spans residues 99 to 131; sequence CRRTCYARMPFQKICEKFLKVSLESEHIPAISC. Residues 132–152 traverse the membrane as a helical segment; that stretch reads FRVVNSAFTAVAILAVDFPLF. The Lumenal portion of the chain corresponds to 153 to 160; it reads PRRYAKTE. The helical transmembrane segment at 161 to 181 threads the bilayer; the sequence is LYGTGAMDYGVGGFIFGSAMV. The Cytoplasmic segment spans residues 182 to 201; that stretch reads SPEVRRKYTKGSRFCYLTKS. A helical transmembrane segment spans residues 202–222; it reads LYSLWPLVFLGVGRLVAIKSV. The Lumenal segment spans residues 223 to 236; the sequence is DYQEHLTEYGVHWN. A helical membrane pass occupies residues 237 to 257; the sequence is FFFTLIAVKLITSLLLLICPL. Residues 258-259 lie on the Cytoplasmic side of the membrane; it reads NR. A helical membrane pass occupies residues 260–280; the sequence is SWVVAISIAALYQLALDFTPL. Residues 281-304 lie on the Lumenal side of the membrane; it reads KSLILYGTDGSGTRVGLLNANREG. The helical transmembrane segment at 305–325 threads the bilayer; the sequence is IISVLGYVAVHMAGVQTGLYV. Residues 326-337 lie on the Cytoplasmic side of the membrane; sequence LKKRSHIKDWIK. The chain crosses the membrane as a helical span at residues 338–358; the sequence is VACCILLTAIGLFISLYIVQV. At 359–369 the chain is on the lumenal side; that stretch reads NVEVASRRMAN. Residues 370-390 traverse the membrane as a helical segment; sequence LAFCIWIVASCLILLSSLLLG. The Cytoplasmic portion of the chain corresponds to 391 to 447; the sequence is DIILSFAKFVIKEAAVPCSWKLIQSPTANKKHLESIVFDAKRKEPTLCLITAMNRNQ. Ser415 is modified (phosphoserine). The chain crosses the membrane as a helical span at residues 448-468; sequence LLFFLLSNVTTGLVNLSIDTL. The Lumenal portion of the chain corresponds to 469-472; it reads HSST. Residues 473 to 493 form a helical membrane-spanning segment; it reads PWALCLLNLYMFTNCLIIYVL. At 494–503 the chain is on the cytoplasmic side; sequence HLQDKTIKFW.

This sequence belongs to the PIGW family.

Its subcellular location is the endoplasmic reticulum membrane. It functions in the pathway glycolipid biosynthesis; glycosylphosphatidylinositol-anchor biosynthesis. Functionally, acyltransferase that catalyzes the acyl transfer from an acyl-CoA at the 2-OH position of the inositol ring of glucosaminyl phosphatidylinositol (GlcN-PI) to generate glucosaminyl acyl phosphatidylinositol (GlcN-(acyl)PI) and participates in the fourth step of GPI-anchor biosynthesis. Required for the transport of GPI-anchored proteins to the plasma membrane. Acetylation during GPI-anchor biosynthesis is not essential for the subsequent mannosylation and is usually removed soon after the attachment of GPIs to proteins. The sequence is that of Glucosaminyl-phosphatidylinositol-acyltransferase PIGW from Bos taurus (Bovine).